We begin with the raw amino-acid sequence, 592 residues long: uncharacterized protein (592 aa).

Positions 1-23 (MRKAPLLRFTLASLALACSQAFA) are cleaved as a signal peptide. The active-site Nucleophile is the Ser37. Catalysis depends on residues Asp294 and His297. Residues 334–592 (HQDELRNQWQ…PDPGEPGGKP (259 aa)) enclose the Autotransporter domain. Residues 572-592 (FTLTGYTPHTAPDPGEPGGKP) are disordered.

The protein belongs to the 'GDSL' lipolytic enzyme family.

This is an uncharacterized protein from Pseudomonas putida (Arthrobacter siderocapsulatus).